Reading from the N-terminus, the 120-residue chain is Crustacean hyperglycemic hormones 1 (120 aa).

Residues 1–27 form the signal peptide; sequence MTAFRMVWSMLLASLLMLLVASSTAPA. Cystine bridges form between cysteine 53–cysteine 89, cysteine 69–cysteine 85, and cysteine 72–cysteine 98. Residue valine 118 is modified to Valine amide.

It belongs to the arthropod CHH/MIH/GIH/VIH hormone family.

It is found in the secreted. Its function is as follows. Hormone found in the sinus gland of isopods and decapods which controls the blood sugar level. Has a secretagogue action over the amylase released from the midgut gland. May act as a stress hormone and may be involved in the control of molting and reproduction. The polypeptide is Crustacean hyperglycemic hormones 1 (CHH1) (Penaeus monodon (Giant tiger prawn)).